The primary structure comprises 190 residues: Threonylcarbamoyl-AMP synthase (190 aa).

Positions 7-190 constitute a YrdC-like domain; sequence RAALSDVLQA…ALTGKQFRQG (184 aa).

It belongs to the SUA5 family. TsaC subfamily.

It localises to the cytoplasm. The catalysed reaction is L-threonine + hydrogencarbonate + ATP = L-threonylcarbamoyladenylate + diphosphate + H2O. Functionally, required for the formation of a threonylcarbamoyl group on adenosine at position 37 (t(6)A37) in tRNAs that read codons beginning with adenine. Catalyzes the conversion of L-threonine, HCO(3)(-)/CO(2) and ATP to give threonylcarbamoyl-AMP (TC-AMP) as the acyladenylate intermediate, with the release of diphosphate. The chain is Threonylcarbamoyl-AMP synthase from Yersinia enterocolitica serotype O:8 / biotype 1B (strain NCTC 13174 / 8081).